A 158-amino-acid chain; its full sequence is Snaclec jerdonuxin subunit alpha (158 aa).

A signal peptide spans 1-23; the sequence is MGRFTFVSFGLLVVFLSLSGTGA. Disulfide bonds link C27–C38, C55–C152, and C127–C144. A C-type lectin domain is found at 34-153; the sequence is YDRYCYQAFS…CGTENPFVCK (120 aa).

Belongs to the snaclec family. In terms of assembly, tetramer of 4 heterodimers of alpha and beta subunits; disulfide-linked. As to expression, expressed by the venom gland.

The protein localises to the secreted. Snaclec that strongly induces platelet aggregation, in a dose-dependent manner. This is Snaclec jerdonuxin subunit alpha from Protobothrops jerdonii (Jerdon's pitviper).